Here is a 303-residue protein sequence, read N- to C-terminus: Y-box-binding protein 1 (303 aa).

A compositionally biased stretch (polar residues) spans 1–12 (MSSEVETQQQQP). Positions 1 to 28 (MSSEVETQQQQPDALEGKAGQEPAATVG) are disordered. The CSD domain occupies 39–103 (GTVKWFNVRN…GEKGAEAANV (65 aa)). Residues 43 to 48 (WFNVRN) form a C5-methylcytosine binding region. The disordered stretch occupies residues 98–303 (AEAANVTGPE…TPEAEQGGAE (206 aa)). A compositionally biased stretch (basic residues) spans 122 to 132 (HYRRYPRRRGP). 2 stretches are compositionally biased toward low complexity: residues 133-143 (PRNYQQNYQNN) and 173-187 (PPYYSRRPYGRRPQY). 2 stretches are compositionally biased toward basic residues: residues 220–229 (FRPRFRRGPP) and 258–270 (RRYRRNFNYRRRR). Positions 271 to 284 (PENPKSQDGKETKA) are enriched in basic and acidic residues.

The protein belongs to the YBX1 family.

The protein localises to the cytoplasm. It localises to the nucleus. The protein resides in the cytoplasmic granule. Its subcellular location is the secreted. It is found in the extracellular exosome. The protein localises to the P-body. Its function is as follows. DNA- and RNA-binding protein involved in various processes, such as translational repression, RNA stabilization, mRNA splicing and transcription regulation. Binds preferentially to the 5'-[CU]CUGCG-3' RNA motif and specifically recognizes mRNA transcripts modified by C5-methylcytosine (m5C). Promotes mRNA stabilization: acts by binding to m5C-containing mRNAs and preventing mRNA decay. Plays a role in the maternal-to-zygotic transition in early embryo by binding to m5C-containing maternal mRNAs and preventing their degradation. Also promotes maternal-to-zygotic transition in oocytes and embryos by promoting translation repression; molecular mechanisms governing translation repression are unknown. Plays a key role in RNA composition of extracellular exosomes by defining the sorting of small non-coding RNAs, such as tRNAs, Y RNAs, Vault RNAs and miRNAs. Probably sorts RNAs in exosomes by recognizing and binding C5-methylcytosine (m5C)-containing RNAs. Acts as a key effector of epidermal progenitors by preventing epidermal progenitor senescence: acts by regulating the translation of a senescence-associated subset of cytokine mRNAs, possibly by binding to m5C-containing mRNAs. Also involved in pre-mRNA alternative splicing regulation: binds to splice sites in pre-mRNA and regulates splice site selection. Also able to bind DNA and regulate transcription. Binds to promoters that contain a Y-box (5'-CTGATTGGCCAA-3'). Promotes separation of DNA strands that contain mismatches or are modified by cisplatin. Has endonucleolytic activity and can introduce nicks or breaks into double-stranded DNA, suggesting a role in DNA repair. The secreted form acts as an extracellular mitogen and stimulates cell migration and proliferation. The protein is Y-box-binding protein 1 of Xenopus laevis (African clawed frog).